A 203-amino-acid chain; its full sequence is NAD(P)H-quinone oxidoreductase subunit I (203 aa).

4Fe-4S ferredoxin-type domains are found at residues 55 to 84 (GRIH…VDWE) and 95 to 124 (KHYS…MTEE). The [4Fe-4S] cluster site is built by C64, C67, C70, C74, C104, C107, C110, and C114.

This sequence belongs to the complex I 23 kDa subunit family. NDH-1 is composed of at least 11 different subunits. Requires [4Fe-4S] cluster as cofactor.

It localises to the cellular thylakoid membrane. It carries out the reaction a plastoquinone + NADH + (n+1) H(+)(in) = a plastoquinol + NAD(+) + n H(+)(out). The enzyme catalyses a plastoquinone + NADPH + (n+1) H(+)(in) = a plastoquinol + NADP(+) + n H(+)(out). NDH-1 shuttles electrons from an unknown electron donor, via FMN and iron-sulfur (Fe-S) centers, to quinones in the respiratory and/or the photosynthetic chain. The immediate electron acceptor for the enzyme in this species is believed to be plastoquinone. Couples the redox reaction to proton translocation, and thus conserves the redox energy in a proton gradient. This is NAD(P)H-quinone oxidoreductase subunit I (ndhI) from Picosynechococcus sp. (strain ATCC 27264 / PCC 7002 / PR-6) (Agmenellum quadruplicatum).